A 336-amino-acid polypeptide reads, in one-letter code: MMLLLPLIIVLMMKLSDARTHSLRYFRLGISEPGYGIPEFISAGYVDSHPITMYNSVSQLKEPRALWMEENLAPDHWERYTQLLRGWQQAFKVELKQLQHHYNHSGFHTYQRMIGCELLEDGSITGFLQYAYDGQDFLIFNKDTLSWMAMDNVADIIRRVWEANRHELQYQKNWLEEECIAWLKRFLEYGKDALQRTEPPKVRVNHKETFPGITTLYCRAYGFYPPEISINWMKNGEEIFQDTDYGGILPSGDGTYQTWVSVELDPQNGDIYSCHVEHGGVHMVLQGFQESETILLVVKAVGFIVLAIALAGVGILAWRKRPRGKNKVICLSTPEH.

The first 18 residues, methionine 1 to alanine 18, serve as a signal peptide directing secretion. The segment at arginine 19 to serine 105 is alpha-1. The antigen-binding cleft stretch occupies residues arginine 19–threonine 197. The Extracellular segment spans residues arginine 19–valine 298. Residues tyrosine 25 and arginine 27 each coordinate 8-(9H-purin-6-yl)-2-oxa-8-azabicyclo[3.3.1]nona-3,6-diene-4,6-dicarbaldehyde. Arginine 27, serine 42, and lysine 61 together coordinate 5-(2-oxoethylideneamino)-6-(D-ribitylamino)uracil. 5-(2-oxopropylideneamino)-6-(D-ribitylamino)uracil is bound by residues arginine 27, serine 42, and lysine 61. 3 residues coordinate 7-hydroxy-6-methyl-8-(1-D-ribityl)lumazine: arginine 27, serine 42, and lysine 61. 2 residues coordinate 8-(9H-purin-6-yl)-2-oxa-8-azabicyclo[3.3.1]nona-3,6-diene-4,6-dicarbaldehyde: lysine 61 and histidine 76. Lysine 61 contributes to the 2-amino-4-oxopteridine-6-carbaldehyde binding site. Lysine 61 is a binding site for pyridoxal. An N-linked (GlcNAc...) asparagine glycan is attached at asparagine 103. The segment at glycine 106–threonine 197 is alpha-2. Position 112 (arginine 112) interacts with 8-(9H-purin-6-yl)-2-oxa-8-azabicyclo[3.3.1]nona-3,6-diene-4,6-dicarbaldehyde. The 5-(2-oxoethylideneamino)-6-(D-ribitylamino)uracil site is built by arginine 112, tyrosine 170, and glutamine 171. The 5-(2-oxopropylideneamino)-6-(D-ribitylamino)uracil site is built by arginine 112, tyrosine 170, and glutamine 171. 7-hydroxy-6-methyl-8-(1-D-ribityl)lumazine-binding residues include arginine 112, tyrosine 170, and glutamine 171. 2 disulfides stabilise this stretch: cysteine 116–cysteine 179 and cysteine 218–cysteine 274. Residues glutamate 198–glutamine 289 form an alpha-3 region. One can recognise an Ig-like C1-type domain in the interval proline 200–leucine 295. Positions glutamate 290–valine 298 are connecting peptide. A helical transmembrane segment spans residues lysine 299–arginine 319. Residues lysine 320 to histidine 336 are Cytoplasmic-facing.

It belongs to the MHC class I family. Heterotrimer that consists of MR1, B2M and metabolite antigen. Major classes of metabolite ligands presented by MR1 include riboflavin-related antigens, pyrimidines and ribityl lumazines, nucleobase adducts and folate derivatives. Forms reversible covalent Schiff base complexes with microbial pyrimidine-based metabolite, which serves as a molecular switch triggering complete folding, stable association with B2M and translocation of the ternary complex from endoplasmic reticulum to the plasma membrane. Alternatively, forms non-Schiff base complexes with ribityl lumazines. On antigen-presenting cells, the ternary complex interacts with TCR on MR1-restricted T cells. Interacts with TAPBP and TAPBPL chaperones in the endoplasmic reticulum. TAPBP associated or not with MHC class I peptide loading complex binds ligand-free MR1 or MR1-B2M complex, providing for stable MR1 pools ready for metabolite antigen processing. TAPBPL interacts with MR1 in a ligand-independent way; this interaction may stabilize MR1 pool and facilitate ligand loading and dissociation. Structurally, MR1-B2M heterodimer adopts a topology similar to classical MHC class I molecules, with alpha-1 and alpha-2 domains of MR1 forming the antigen-binding cleft composed of two alpha-helices resting on a floor of 7-stranded anti-parallel beta-pleated sheet. MR1-B2M heterodimer (via alpha-helices) interacts with TCR (via CDR domains). In terms of processing, N-glycosylated.

It is found in the cell membrane. It localises to the endoplasmic reticulum membrane. Its subcellular location is the golgi apparatus membrane. The protein resides in the early endosome membrane. The protein localises to the late endosome membrane. Functionally, antigen-presenting molecule specialized in displaying microbial pyrimidine-based metabolites to alpha-beta T cell receptors (TCR) on innate-type mucosal-associated invariant T (MAIT) cells. In complex with B2M preferentially presents riboflavin-derived metabolites to semi-invariant TCRs on MAIT cells, guiding immune surveillance of the microbial metabolome at mucosal epithelial barriers. Signature pyrimidine-based microbial antigens are generated via non-enzymatic condensation of metabolite intermediates of the riboflavin pathway with by-products arising from other metabolic pathways such as glycolysis. Typical potent antigenic metabolites are 5-(2-oxoethylideneamino)-6-D-ribitylaminouracil (5-OE-RU) and 5-(2-oxopropylideneamino)-6-D-ribitylaminouracil (5-OP-RU), products of condensation of 5-amino-6-D-ribityaminouracil (5-A-RU) with glyoxal or methylglyoxal by-products, respectively. May present microbial antigens to various MAIT cell subsets, providing for unique recognition of diverse microbes, including pathogens that do not synthesize riboflavin. Upon antigen recognition, elicits rapid innate-type MAIT cell activation to eliminate pathogenic microbes by directly killing infected cells. During T cell development, drives thymic selection and post-thymic terminal differentiation of MAIT cells in a process dependent on commensal microflora. Acts as an immune sensor of cancer cell metabolome. May present a tumor-specific or -associated metabolite essential for cancer cell survival to a pan-cancer TCR on a non-MAIT CD8-positive T cell clone, triggering T cell-mediated killing of a wide range of cancer cell types. May present tumor-enriched pyridoxal and pyridoxal 5'-phosphate antigens, enabling preferential recognition of cancer cells. Presents nucleobase carbonyl adducts generated during oxidative stress. Captures M3Ade, a nucleobase adduct composed of one adenine modified by a malondialdehyde trimer, for recognition by MR1-restricted T cell clones expressing a polyclonal TCR repertoire. This is Major histocompatibility complex class I-related protein 1 from Bos taurus (Bovine).